We begin with the raw amino-acid sequence, 506 residues long: Thyroid hormone receptor alpha (506 aa).

Positions 1 to 32 (MEQKPSKVECGSDPEENSARSPDGKRKRKNGQ) are disordered. Positions 1 to 52 (MEQKPSKVECGSDPEENSARSPDGKRKRKNGQCSLKTSMSGYIPSYLDKDEQ) are modulating. Residues Cys-53, Cys-56, Cys-70, Cys-73, Cys-91, Cys-97, Cys-107, and Cys-110 each contribute to the Zn(2+) site. 2 NR C4-type zinc fingers span residues 53–73 (CVVC…CEGC) and 91–115 (CKYD…FKKC). A DNA-binding region (nuclear receptor) is located at residues 53–127 (CVVCGDKATG…VGMAMDLVLD (75 aa)). An NR LBD domain is found at 163 to 407 (EEWDLIHVAT…EGQQLLGMHV (245 aa)). 3,3',5-triiodo-L-thyronine-binding residues include Arg-228 and Ser-277. Residues 460 to 506 (GEDDSSEAGSLTSSDEDPEVCEDAAQATQPLPEAPPRADGEGGGGGS) form a disordered region.

Belongs to the nuclear hormone receptor family. NR1 subfamily. Binds DNA as a dimer; homodimer and heterodimer with RXRB. Interacts with NCOA3 and NCOA6 coactivators, leading to a strong increase of transcription of target genes. Probably interacts with SFPQ. Interacts with C1D. Interacts with AKAP13. Interacts with TP53INP2. Interacts with PER2. Interacts with PER2. Isoform alpha-2 and isoform alpha-1 interact with TACC1, but the interaction with alpha-1 is weaker. The interaction with isoform alpha-1, but not alpha-2, is decreased in the presence of thyroid hormone T3.

It is found in the nucleus. It localises to the cytoplasm. Functionally, nuclear hormone receptor that can act as a repressor or activator of transcription. High affinity receptor for thyroid hormones, including triiodothyronine and thyroxine. This Sus scrofa (Pig) protein is Thyroid hormone receptor alpha (THRA).